The primary structure comprises 242 residues: Large ribosomal subunit protein uL1 (242 aa).

Belongs to the universal ribosomal protein uL1 family. Part of the 50S ribosomal subunit.

Functionally, binds directly to 23S rRNA. The L1 stalk is quite mobile in the ribosome, and is involved in E site tRNA release. Its function is as follows. Protein L1 is also a translational repressor protein, it controls the translation of the L11 operon by binding to its mRNA. The protein is Large ribosomal subunit protein uL1 of Streptomyces virginiae (Streptomyces cinnamonensis).